Reading from the N-terminus, the 1564-residue chain is Nucleoporin nup184 (1564 aa).

It localises to the nucleus. The protein resides in the nuclear pore complex. Functionally, interacts with pom152 in the core structure of the nuclear pore complex (NPC). Involved in the export of mRNA. The sequence is that of Nucleoporin nup184 (nup184) from Schizosaccharomyces pombe (strain 972 / ATCC 24843) (Fission yeast).